The sequence spans 374 residues: Very late expression factor 1 (374 aa).

Residues 169-349 form the Tyr recombinase domain; the sequence is AIDTILNFID…NFDESSSDEE (181 aa). Residues R210, K239, R303, and H326 contribute to the active site. The interval 328–374 is disordered; it reads SPASTKPYLNKYNFDESSSDEESGGNNRDSSTGSSANSSSLYYQTGD. The active-site O-(3'-phospho-DNA)-tyrosine intermediate is the Y335. A compositionally biased stretch (low complexity) spans 357–367; it reads SSTGSSANSSS.

The protein belongs to the 'phage' integrase family.

Involved in very late gene activation. The chain is Very late expression factor 1 (VLF-1) from Orgyia pseudotsugata (Douglas-fir tussock moth).